We begin with the raw amino-acid sequence, 514 residues long: Pantothenate transporter liz1 (514 aa).

A run of 12 helical transmembrane segments spans residues 24–44, 72–92, 98–118, 128–148, 159–179, 194–214, 263–283, 300–320, 329–349, 357–377, 390–410, and 423–443; these read LLIK…FINY, INVV…YALQ, LWFS…FAVH, FFMA…LGAW, GIFS…QTAV, WLFI…LFLF, GLCI…NVLM, NYPT…SVIS, WPFG…LLAW, FFAY…FSWA, VVVF…APIM, and LIGL…VSYM.

Belongs to the major facilitator superfamily. Allantoate permease family.

It is found in the cell membrane. Its function is as follows. Transports pantothenate into the cell. The sequence is that of Pantothenate transporter liz1 (liz1) from Schizosaccharomyces pombe (strain 972 / ATCC 24843) (Fission yeast).